Reading from the N-terminus, the 360-residue chain is Phospho-N-acetylmuramoyl-pentapeptide-transferase (360 aa).

Residues 1-25 (MLVWLAEHLVKYYSGFNVFSYLTFR) are Periplasmic-facing. The helical transmembrane segment at 26 to 46 (AIVSLLTALFISLWMGPRMIA) threads the bilayer. Over 47-71 (RLQKLSFGQVVRNDGPESHFSKRGT) the chain is Cytoplasmic. Residues 72-92 (PTMGGIMILTAIVISVLLWAY) form a helical membrane-spanning segment. A topological domain (periplasmic) is located at residue Pro-93. A helical transmembrane segment spans residues 94-114 (SNPYVWCVLVVLIGYGIIGFV). At 115–131 (DDYRKVVRKDTKGLIAR) the chain is on the cytoplasmic side. The helical transmembrane segment at 132–152 (WKYFWMSVIALGVAFALYLVG) threads the bilayer. Topologically, residues 153 to 167 (KDTPATQLVVPFFKD) are periplasmic. A helical membrane pass occupies residues 168-188 (VMPQLGLFYILLSYFVIVGTG). Over 189-198 (NAVNLTDGLD) the chain is Cytoplasmic. Residues 199 to 219 (GLAIMPTVFVAAGFALVAWAT) traverse the membrane as a helical segment. The Periplasmic portion of the chain corresponds to 220–235 (GNMNFANYLHIPYLRH). Residues 236–256 (AGELVIVCTAIVGAGLGFLWF) traverse the membrane as a helical segment. The Cytoplasmic segment spans residues 257 to 262 (NTYPAQ). Residues 263–283 (VFMGDVGSLALGGALGIIAVL) traverse the membrane as a helical segment. Topologically, residues 284-287 (LRQE) are periplasmic. Residues 288-308 (FLLVIMGGVFVVETLSVILQV) traverse the membrane as a helical segment. The Cytoplasmic segment spans residues 309–337 (GSFKLRGQRIFRMAPIHHHYELKGWPEPR). Residues 338 to 358 (VIVRFWIISLMLVLIGLATLK) form a helical membrane-spanning segment. At 359–360 (VR) the chain is on the periplasmic side.

It belongs to the glycosyltransferase 4 family. MraY subfamily. Mg(2+) serves as cofactor.

It localises to the cell inner membrane. The catalysed reaction is UDP-N-acetyl-alpha-D-muramoyl-L-alanyl-gamma-D-glutamyl-meso-2,6-diaminopimeloyl-D-alanyl-D-alanine + di-trans,octa-cis-undecaprenyl phosphate = di-trans,octa-cis-undecaprenyl diphospho-N-acetyl-alpha-D-muramoyl-L-alanyl-D-glutamyl-meso-2,6-diaminopimeloyl-D-alanyl-D-alanine + UMP. It participates in cell wall biogenesis; peptidoglycan biosynthesis. Catalyzes the initial step of the lipid cycle reactions in the biosynthesis of the cell wall peptidoglycan: transfers peptidoglycan precursor phospho-MurNAc-pentapeptide from UDP-MurNAc-pentapeptide onto the lipid carrier undecaprenyl phosphate, yielding undecaprenyl-pyrophosphoryl-MurNAc-pentapeptide, known as lipid I. In Salmonella agona (strain SL483), this protein is Phospho-N-acetylmuramoyl-pentapeptide-transferase.